The following is a 737-amino-acid chain: Catalase-peroxidase (737 aa).

Positions 1 to 32 (MSKENMSNEGKCPFNHGAAGTNQSSGRGTSNK) are disordered. Over residues 20-32 (GTNQSSGRGTSNK) the composition is skewed to polar residues. Positions 103–226 (WHSAGTYRTA…LAAVQMGLIY (124 aa)) form a cross-link, tryptophyl-tyrosyl-methioninium (Trp-Tyr) (with M-252). His104 serves as the catalytic Proton acceptor. Residues 226–252 (YVNPEGPEGKPDTLASARDIRDTFGRM) constitute a cross-link (tryptophyl-tyrosyl-methioninium (Tyr-Met) (with W-103)). Position 267 (His267) interacts with heme b.

It belongs to the peroxidase family. Peroxidase/catalase subfamily. As to quaternary structure, homodimer or homotetramer. Heme b serves as cofactor. Post-translationally, formation of the three residue Trp-Tyr-Met cross-link is important for the catalase, but not the peroxidase activity of the enzyme.

The catalysed reaction is H2O2 + AH2 = A + 2 H2O. It carries out the reaction 2 H2O2 = O2 + 2 H2O. Bifunctional enzyme with both catalase and broad-spectrum peroxidase activity. The chain is Catalase-peroxidase from Marinomonas sp. (strain MWYL1).